We begin with the raw amino-acid sequence, 186 residues long: Adenylate kinase (186 aa).

10-15 serves as a coordination point for ATP; that stretch reads GVGKGT. Residues 30 to 59 are NMP; the sequence is STGDIFRYNIKNKTELGLEAMSYTDKGELV. Residues Thr-31, Arg-36, 57–59, 85–88, and Gln-92 contribute to the AMP site; these read ELV and GYPR. An LID region spans residues 126–136; sequence KRAAEQGRADD. Residue Arg-127 coordinates ATP. Residues Arg-133 and Arg-144 each contribute to the AMP site. Gly-172 is an ATP binding site.

This sequence belongs to the adenylate kinase family. In terms of assembly, monomer.

Its subcellular location is the cytoplasm. The enzyme catalyses AMP + ATP = 2 ADP. It functions in the pathway purine metabolism; AMP biosynthesis via salvage pathway; AMP from ADP: step 1/1. Functionally, catalyzes the reversible transfer of the terminal phosphate group between ATP and AMP. Plays an important role in cellular energy homeostasis and in adenine nucleotide metabolism. This is Adenylate kinase from Bifidobacterium longum (strain NCC 2705).